Consider the following 205-residue polypeptide: Thymidylate kinase (205 aa).

11-18 is an ATP binding site; sequence GVEGSGKS.

The protein belongs to the thymidylate kinase family.

The enzyme catalyses dTMP + ATP = dTDP + ADP. Phosphorylation of dTMP to form dTDP in both de novo and salvage pathways of dTTP synthesis. This chain is Thymidylate kinase, found in Ruthia magnifica subsp. Calyptogena magnifica.